Consider the following 252-residue polypeptide: MKFIGIIPARYASTRFPAKPLAVLGGKPVIQRVYEQVSGILDEAYVATDDERIESAVKAFGGKVVMTSVHHKSGTDRCYEAYTKVGRGYDVVVNIQGDEPFIQKSQLEAVKACFEDPATQIATLVKPFIPDDGLEALENVNSPKVVVGKNMNALYFSRSIIPFQRNVEKEGWLKGHTYYKHIGLYAYRADVLKEITSLPQSSLELAESLEQLRWLENGYTIKVGISEVETIGIDTPQDLARAEAFLKQREGE.

Belongs to the KdsB family.

The protein resides in the cytoplasm. It carries out the reaction 3-deoxy-alpha-D-manno-oct-2-ulosonate + CTP = CMP-3-deoxy-beta-D-manno-octulosonate + diphosphate. The protein operates within nucleotide-sugar biosynthesis; CMP-3-deoxy-D-manno-octulosonate biosynthesis; CMP-3-deoxy-D-manno-octulosonate from 3-deoxy-D-manno-octulosonate and CTP: step 1/1. It functions in the pathway bacterial outer membrane biogenesis; lipopolysaccharide biosynthesis. Functionally, activates KDO (a required 8-carbon sugar) for incorporation into bacterial lipopolysaccharide in Gram-negative bacteria. This Phocaeicola vulgatus (strain ATCC 8482 / DSM 1447 / JCM 5826 / CCUG 4940 / NBRC 14291 / NCTC 11154) (Bacteroides vulgatus) protein is 3-deoxy-manno-octulosonate cytidylyltransferase.